The following is a 325-amino-acid chain: Lipoyl synthase (325 aa).

Cysteine 72, cysteine 77, cysteine 83, cysteine 98, cysteine 102, cysteine 105, and serine 312 together coordinate [4Fe-4S] cluster. Residues 84 to 301 (FAGGTATFMI…AEEGERMGFK (218 aa)) enclose the Radical SAM core domain.

It belongs to the radical SAM superfamily. Lipoyl synthase family. [4Fe-4S] cluster serves as cofactor.

It localises to the cytoplasm. The catalysed reaction is [[Fe-S] cluster scaffold protein carrying a second [4Fe-4S](2+) cluster] + N(6)-octanoyl-L-lysyl-[protein] + 2 oxidized [2Fe-2S]-[ferredoxin] + 2 S-adenosyl-L-methionine + 4 H(+) = [[Fe-S] cluster scaffold protein] + N(6)-[(R)-dihydrolipoyl]-L-lysyl-[protein] + 4 Fe(3+) + 2 hydrogen sulfide + 2 5'-deoxyadenosine + 2 L-methionine + 2 reduced [2Fe-2S]-[ferredoxin]. It functions in the pathway protein modification; protein lipoylation via endogenous pathway; protein N(6)-(lipoyl)lysine from octanoyl-[acyl-carrier-protein]: step 2/2. Its function is as follows. Catalyzes the radical-mediated insertion of two sulfur atoms into the C-6 and C-8 positions of the octanoyl moiety bound to the lipoyl domains of lipoate-dependent enzymes, thereby converting the octanoylated domains into lipoylated derivatives. In Azotobacter vinelandii (strain DJ / ATCC BAA-1303), this protein is Lipoyl synthase.